A 38-amino-acid polypeptide reads, in one-letter code: Large ribosomal subunit protein bL36 (38 aa).

The protein belongs to the bacterial ribosomal protein bL36 family.

The polypeptide is Large ribosomal subunit protein bL36 (Roseiflexus castenholzii (strain DSM 13941 / HLO8)).